Here is a 173-residue protein sequence, read N- to C-terminus: RNA pyrophosphohydrolase (173 aa).

Residues Pro-11–Lys-164 enclose the Nudix hydrolase domain. A Nudix box motif is present at residues Gly-52–Gly-73.

This sequence belongs to the Nudix hydrolase family. RppH subfamily. The cofactor is a divalent metal cation.

Its function is as follows. Accelerates the degradation of transcripts by removing pyrophosphate from the 5'-end of triphosphorylated RNA, leading to a more labile monophosphorylated state that can stimulate subsequent ribonuclease cleavage. The chain is RNA pyrophosphohydrolase from Bartonella clarridgeiae.